The primary structure comprises 354 residues: UDP-N-acetylglucosamine--N-acetylmuramyl-(pentapeptide) pyrophosphoryl-undecaprenol N-acetylglucosamine transferase 3 (354 aa).

UDP-N-acetyl-alpha-D-glucosamine contacts are provided by residues 12–14 (TAG), Arg163, Ser193, and Gln287.

It belongs to the glycosyltransferase 28 family. MurG subfamily.

It is found in the cell membrane. The catalysed reaction is di-trans,octa-cis-undecaprenyl diphospho-N-acetyl-alpha-D-muramoyl-L-alanyl-D-glutamyl-meso-2,6-diaminopimeloyl-D-alanyl-D-alanine + UDP-N-acetyl-alpha-D-glucosamine = di-trans,octa-cis-undecaprenyl diphospho-[N-acetyl-alpha-D-glucosaminyl-(1-&gt;4)]-N-acetyl-alpha-D-muramoyl-L-alanyl-D-glutamyl-meso-2,6-diaminopimeloyl-D-alanyl-D-alanine + UDP + H(+). Its pathway is cell wall biogenesis; peptidoglycan biosynthesis. Functionally, cell wall formation. Catalyzes the transfer of a GlcNAc subunit on undecaprenyl-pyrophosphoryl-MurNAc-pentapeptide (lipid intermediate I) to form undecaprenyl-pyrophosphoryl-MurNAc-(pentapeptide)GlcNAc (lipid intermediate II). In Bacillus cereus (strain ATCC 14579 / DSM 31 / CCUG 7414 / JCM 2152 / NBRC 15305 / NCIMB 9373 / NCTC 2599 / NRRL B-3711), this protein is UDP-N-acetylglucosamine--N-acetylmuramyl-(pentapeptide) pyrophosphoryl-undecaprenol N-acetylglucosamine transferase 3.